Reading from the N-terminus, the 125-residue chain is Ribonuclease P protein component (125 aa).

It belongs to the RnpA family. In terms of assembly, consists of a catalytic RNA component (M1 or rnpB) and a protein subunit.

The catalysed reaction is Endonucleolytic cleavage of RNA, removing 5'-extranucleotides from tRNA precursor.. In terms of biological role, RNaseP catalyzes the removal of the 5'-leader sequence from pre-tRNA to produce the mature 5'-terminus. It can also cleave other RNA substrates such as 4.5S RNA. The protein component plays an auxiliary but essential role in vivo by binding to the 5'-leader sequence and broadening the substrate specificity of the ribozyme. The protein is Ribonuclease P protein component of Rhodococcus opacus (strain B4).